Consider the following 317-residue polypeptide: MQPYTKNWTQVTEFVMMGFAGIHEAHLLFFILFLTMYLFTLVENLAIILVVGLDHRLRRPMYFFLTHLSCLEIWYTSVTVPKMLAGFIGVDGGKNISYADCLSQLFIFTFLGATECFLLAAMAYDRYVAICMPLHYGAFVSWGTCIRLAAACWLVGFLTPILPIYLLSQLTFYGPNVIDHFSCDASPLLALSCSDVTWKETVDFLVSLAVLLASSMVIAVSYGNIVWTLLHIRSAAERWKAFSTCAAHLTVVSLFYGTLFFMYVQTKVTSSINFNKVVSVFYSVVTPMLNPLIYSLRNKEVKGALGRVFSLNFWKGQ.

Residues 1–27 are Extracellular-facing; that stretch reads MQPYTKNWTQVTEFVMMGFAGIHEAHL. A glycan (N-linked (GlcNAc...) asparagine) is linked at Asn7. The chain crosses the membrane as a helical span at residues 28–48; sequence LFFILFLTMYLFTLVENLAII. Residues 49 to 56 lie on the Cytoplasmic side of the membrane; the sequence is LVVGLDHR. The chain crosses the membrane as a helical span at residues 57–77; the sequence is LRRPMYFFLTHLSCLEIWYTS. Topologically, residues 78–103 are extracellular; sequence VTVPKMLAGFIGVDGGKNISYADCLS. An N-linked (GlcNAc...) asparagine glycan is attached at Asn95. Residues Cys101 and Cys193 are joined by a disulfide bond. The helical transmembrane segment at 104 to 124 threads the bilayer; sequence QLFIFTFLGATECFLLAAMAY. Residues 125–143 lie on the Cytoplasmic side of the membrane; the sequence is DRYVAICMPLHYGAFVSWG. The chain crosses the membrane as a helical span at residues 144–164; sequence TCIRLAAACWLVGFLTPILPI. The Extracellular segment spans residues 165–201; that stretch reads YLLSQLTFYGPNVIDHFSCDASPLLALSCSDVTWKET. The chain crosses the membrane as a helical span at residues 202 to 221; that stretch reads VDFLVSLAVLLASSMVIAVS. The Cytoplasmic segment spans residues 222–241; that stretch reads YGNIVWTLLHIRSAAERWKA. A helical membrane pass occupies residues 242-262; the sequence is FSTCAAHLTVVSLFYGTLFFM. The Extracellular segment spans residues 263–275; it reads YVQTKVTSSINFN. Residues 276 to 296 form a helical membrane-spanning segment; the sequence is KVVSVFYSVVTPMLNPLIYSL. Residues 297 to 317 are Cytoplasmic-facing; sequence RNKEVKGALGRVFSLNFWKGQ.

This sequence belongs to the G-protein coupled receptor 1 family.

The protein resides in the cell membrane. In terms of biological role, odorant receptor. This Homo sapiens (Human) protein is Olfactory receptor 6Q1 (OR6Q1).